We begin with the raw amino-acid sequence, 201 residues long: Peptide deformylase (201 aa).

Cys121 and His163 together coordinate Fe cation. Glu164 is an active-site residue. Position 167 (His167) interacts with Fe cation.

Belongs to the polypeptide deformylase family. It depends on Fe(2+) as a cofactor.

The catalysed reaction is N-terminal N-formyl-L-methionyl-[peptide] + H2O = N-terminal L-methionyl-[peptide] + formate. In terms of biological role, removes the formyl group from the N-terminal Met of newly synthesized proteins. Requires at least a dipeptide for an efficient rate of reaction. N-terminal L-methionine is a prerequisite for activity but the enzyme has broad specificity at other positions. This is Peptide deformylase from Parasynechococcus marenigrum (strain WH8102).